The primary structure comprises 213 residues: ATP synthase peripheral stalk subunit OSCP, mitochondrial (213 aa).

A mitochondrion-targeting transit peptide spans 1 to 23 (MAAPAVSGLSRQVRYFSTSVVRP). The SIFI-degron signature appears at 5-23 (AVSGLSRQVRYFSTSVVRP). An N6-acetyllysine mark is found at lysine 54, lysine 60, lysine 70, and lysine 73. Lysine 90 carries the post-translational modification N6-succinyllysine. Residues lysine 158 and lysine 162 each carry the N6-acetyllysine; alternate modification. Lysine 158 and lysine 162 each carry N6-succinyllysine; alternate. N6-acetyllysine occurs at positions 172, 176, and 192. An N6-succinyllysine modification is found at lysine 199.

This sequence belongs to the ATPase delta chain family. Component of the ATP synthase complex composed at least of ATP5F1A/subunit alpha, ATP5F1B/subunit beta, ATP5MC1/subunit c (homooctomer), MT-ATP6/subunit a, MT-ATP8/subunit 8, ATP5ME/subunit e, ATP5MF/subunit f, ATP5MG/subunit g, ATP5MK/subunit k, ATP5MJ/subunit j, ATP5F1C/subunit gamma, ATP5F1D/subunit delta, ATP5F1E/subunit epsilon, ATP5PF/subunit F6, ATP5PB/subunit b, ATP5PD/subunit d, ATP5PO/subunit OSCP. ATP synthase complex consists of a soluble F(1) head domain (subunits alpha(3) and beta(3)) - the catalytic core - and a membrane F(0) domain - the membrane proton channel (subunits c, a, 8, e, f, g, k and j). These two domains are linked by a central stalk (subunits gamma, delta, and epsilon) rotating inside the F1 region and a stationary peripheral stalk (subunits F6, b, d, and OSCP). In terms of processing, acetylation at Lys-162 decreases ATP production. Deacetylated by SIRT3. Post-translationally, in response to mitochondrial stress, the precursor protein is ubiquitinated by the SIFI complex in the cytoplasm before mitochondrial import, leading to its degradation. Within the SIFI complex, UBR4 initiates ubiquitin chain that are further elongated or branched by KCMF1.

It is found in the mitochondrion. It localises to the mitochondrion inner membrane. Its function is as follows. Subunit OSCP, of the mitochondrial membrane ATP synthase complex (F(1)F(0) ATP synthase or Complex V) that produces ATP from ADP in the presence of a proton gradient across the membrane which is generated by electron transport complexes of the respiratory chain. ATP synthase complex consist of a soluble F(1) head domain - the catalytic core - and a membrane F(1) domain - the membrane proton channel. These two domains are linked by a central stalk rotating inside the F(1) region and a stationary peripheral stalk. During catalysis, ATP synthesis in the catalytic domain of F(1) is coupled via a rotary mechanism of the central stalk subunits to proton translocation. In vivo, can only synthesize ATP although its ATP hydrolase activity can be activated artificially in vitro. Part of the complex F(0) domain. Part of the complex F(0) domain and the peripheric stalk, which acts as a stator to hold the catalytic alpha(3)beta(3) subcomplex and subunit a/ATP6 static relative to the rotary elements. The chain is ATP synthase peripheral stalk subunit OSCP, mitochondrial from Plecturocebus moloch (Dusky titi monkey).